A 130-amino-acid chain; its full sequence is Small ribosomal subunit protein uS11 (130 aa).

Belongs to the universal ribosomal protein uS11 family. As to quaternary structure, part of the 30S ribosomal subunit. Interacts with proteins S7 and S18. Binds to IF-3.

In terms of biological role, located on the platform of the 30S subunit, it bridges several disparate RNA helices of the 16S rRNA. Forms part of the Shine-Dalgarno cleft in the 70S ribosome. The chain is Small ribosomal subunit protein uS11 from Thermotoga maritima (strain ATCC 43589 / DSM 3109 / JCM 10099 / NBRC 100826 / MSB8).